The chain runs to 185 residues: Deoxyuridine 5'-triphosphate nucleotidohydrolase (185 aa).

Residues 1–23 (MSHLQAHMQRNNKESHSLSPFSQ) are disordered. Residues 95–97 (RSG), N108, 112–114 (TID), and K122 each bind substrate. The disordered stretch occupies residues 160–185 (DQKDSSQTPSNEGSRGADGFGSTGHD). Residues 175-185 (GADGFGSTGHD) are compositionally biased toward gly residues.

Belongs to the dUTPase family. Mg(2+) serves as cofactor.

It catalyses the reaction dUTP + H2O = dUMP + diphosphate + H(+). It participates in pyrimidine metabolism; dUMP biosynthesis; dUMP from dCTP (dUTP route): step 2/2. Its function is as follows. This enzyme is involved in nucleotide metabolism: it produces dUMP, the immediate precursor of thymidine nucleotides and it decreases the intracellular concentration of dUTP so that uracil cannot be incorporated into DNA. This is Deoxyuridine 5'-triphosphate nucleotidohydrolase from Bartonella quintana (strain Toulouse) (Rochalimaea quintana).